A 999-amino-acid chain; its full sequence is Hypoxia up-regulated protein 1 (999 aa).

An N-terminal signal peptide occupies residues 1–32 (MAATVRRQRPRRLLCWALVAVLLADLLALSDT). N-linked (GlcNAc...) asparagine glycosylation is found at N155, N222, and N515. The residue at position 567 (S567) is a Phosphoserine. The segment at 567–694 (SPEEESTLTK…KKPKPARKQK (128 aa)) is disordered. Over residues 574–583 (LTKLGNTISS) the composition is skewed to polar residues. N-linked (GlcNAc...) asparagine glycosylation is present at N596. Composition is skewed to basic and acidic residues over residues 611–626 (GSKD…KEEA) and 641–668 (PKGD…KPNE). Residues 669–680 (KGQAGPEGAAPA) show a composition bias toward low complexity. 3 N-linked (GlcNAc...) asparagine glycosylation sites follow: N830, N862, and N869. Position 883 is an N6-acetyllysine (K883). The disordered stretch occupies residues 909-999 (AKFTKPRPRP…QKRPSKNDEL (91 aa)). N-linked (GlcNAc...) asparagine glycosylation is found at N922 and N931. The span at 949-962 (EEAKPILEPDKEET) shows a compositional bias: basic and acidic residues. Residues 996-999 (NDEL) carry the Prevents secretion from ER motif.

It belongs to the heat shock protein 70 family. In terms of assembly, part of a large chaperone multiprotein complex comprising DNAJB11, HSP90B1, HSPA5, HYOU, PDIA2, PDIA4, PDIA6, PPIB, SDF2L1, UGGT1 and very small amounts of ERP29, but not, or at very low levels, CALR nor CANX.

Its subcellular location is the endoplasmic reticulum lumen. Its function is as follows. Has a pivotal role in cytoprotective cellular mechanisms triggered by oxygen deprivation. Promotes HSPA5/BiP-mediated ATP nucleotide exchange and thereby activates the unfolded protein response (UPR) pathway in the presence of endoplasmic reticulum stress. May play a role as a molecular chaperone and participate in protein folding. The polypeptide is Hypoxia up-regulated protein 1 (Hyou1) (Mus musculus (Mouse)).